The sequence spans 284 residues: Sulfotransferase 2A1 (284 aa).

Lysine 43, serine 44, glycine 45, threonine 46, asparagine 47, and tryptophan 48 together coordinate 3'-phosphoadenylyl sulfate. The active-site Proton acceptor is the histidine 98. The 3'-phosphoadenylyl sulfate site is built by arginine 120, serine 128, tyrosine 183, serine 217, methionine 222, arginine 246, lysine 247, and glycine 248.

The protein belongs to the sulfotransferase 1 family. Homodimer.

It localises to the cytoplasm. It catalyses the reaction an alcohol + 3'-phosphoadenylyl sulfate = an alkyl sulfate + adenosine 3',5'-bisphosphate + H(+). It carries out the reaction taurolithocholate + 3'-phosphoadenylyl sulfate = taurolithocholate 3-sulfate + adenosine 3',5'-bisphosphate + H(+). The enzyme catalyses lithocholate + 3'-phosphoadenylyl sulfate = lithocholate sulfate + adenosine 3',5'-bisphosphate + H(+). The catalysed reaction is (24S)-hydroxycholesterol + 3'-phosphoadenylyl sulfate = (24S)-hydroxycholesterol 24-sulfate + adenosine 3',5'-bisphosphate + H(+). It catalyses the reaction (24S)-hydroxycholesterol + 3'-phosphoadenylyl sulfate = (24S)-hydroxycholesterol 3-sulfate + adenosine 3',5'-bisphosphate + H(+). It carries out the reaction (24S)-hydroxycholesterol 24-sulfate + 3'-phosphoadenylyl sulfate = (24S)-hydroxycholesterol 3,24-disulfate + adenosine 3',5'-bisphosphate + H(+). The enzyme catalyses 3beta-hydroxyandrost-5-en-17-one + 3'-phosphoadenylyl sulfate = dehydroepiandrosterone 3-sulfate + adenosine 3',5'-bisphosphate + H(+). The catalysed reaction is pregnenolone + 3'-phosphoadenylyl sulfate = pregnenolone sulfate + adenosine 3',5'-bisphosphate + H(+). It catalyses the reaction androsterone + 3'-phosphoadenylyl sulfate = androsterone 3alpha-sulfate + adenosine 3',5'-bisphosphate + H(+). Its function is as follows. Sulfotransferase that utilizes 3'-phospho-5'-adenylyl sulfate (PAPS) as sulfonate donor to catalyze the sulfonation of steroids and bile acids in the liver and adrenal glands. Mediates the sulfation of a wide range of steroids and sterols, including pregnenolone, androsterone, DHEA, bile acids, cholesterol and as well many xenobiotics that contain alcohol and phenol functional groups. Sulfonation increases the water solubility of most compounds, and therefore their renal excretion, but it can also result in bioactivation to form active metabolites. Plays an important role in maintening steroid and lipid homeostasis. Plays a key role in bile acid metabolism. In addition, catalyzes the metabolic activation of potent carcinogenic polycyclic arylmethanols. This is Sulfotransferase 2A1 (Sult2a1) from Rattus norvegicus (Rat).